Consider the following 288-residue polypeptide: NGG1-interacting factor 3 (288 aa).

It belongs to the GTP cyclohydrolase I type 2/NIF3 family. As to quaternary structure, may interact with NGG1.

Its subcellular location is the mitochondrion. This chain is NGG1-interacting factor 3, found in Saccharomyces cerevisiae (strain ATCC 204508 / S288c) (Baker's yeast).